Reading from the N-terminus, the 580-residue chain is Dihydroxy-acid dehydratase (580 aa).

Residues 1–31 (MPSGSSESPADALRASDSTPDIKPRSRDVTD) are disordered. Over residues 20–31 (PDIKPRSRDVTD) the composition is skewed to basic and acidic residues. C69 contacts [2Fe-2S] cluster. D101 serves as a coordination point for Mg(2+). C142 lines the [2Fe-2S] cluster pocket. Mg(2+) is bound by residues D143 and K144. K144 carries the N6-carboxylysine modification. C219 lines the [2Fe-2S] cluster pocket. Residue E470 participates in Mg(2+) binding. S496 functions as the Proton acceptor in the catalytic mechanism.

It belongs to the IlvD/Edd family. Homodimer. The cofactor is [2Fe-2S] cluster. It depends on Mg(2+) as a cofactor.

It catalyses the reaction (2R)-2,3-dihydroxy-3-methylbutanoate = 3-methyl-2-oxobutanoate + H2O. The catalysed reaction is (2R,3R)-2,3-dihydroxy-3-methylpentanoate = (S)-3-methyl-2-oxopentanoate + H2O. Its pathway is amino-acid biosynthesis; L-isoleucine biosynthesis; L-isoleucine from 2-oxobutanoate: step 3/4. The protein operates within amino-acid biosynthesis; L-valine biosynthesis; L-valine from pyruvate: step 3/4. Functionally, functions in the biosynthesis of branched-chain amino acids. Catalyzes the dehydration of (2R,3R)-2,3-dihydroxy-3-methylpentanoate (2,3-dihydroxy-3-methylvalerate) into 2-oxo-3-methylpentanoate (2-oxo-3-methylvalerate) and of (2R)-2,3-dihydroxy-3-methylbutanoate (2,3-dihydroxyisovalerate) into 2-oxo-3-methylbutanoate (2-oxoisovalerate), the penultimate precursor to L-isoleucine and L-valine, respectively. This is Dihydroxy-acid dehydratase from Mycobacterium sp. (strain JLS).